A 700-amino-acid polypeptide reads, in one-letter code: MAQDVLTDLKKVRNIGIMAHIDAGKTTTTERILFYTGVNYKIGETHDGASTTDWMEQEQERGITITSAAVTCFWNQNQINIIDTPGHVDFTVEVERSLRVLDGAVAVFDGKEGVEPQSEQVWRQADKYDVPRICFVNKMDKLGADFYFTVQTIKDRLGARPLVIQLPIGAEDTFEGVVDLVEMNAKVWTGETKLGEKYEVKEIPADLAEKAEQYRQELLEAVAESDEALLDKFFGGEELTIDEIKGAIRKMTVNSEAYPVLCGSAFKNKGVQPMLDAVIDYLPSPLDVENVEGHVPGKEDEVINRRPSADEPFAALAFKIAVHPFFGKLTYIRVYSGKVDSGAQVINATKGKKERLGKLFQMHANKENPVPEVSAGHIYAVIGLKDTTTGDTLCDPQNQIVLESMTFPDPVIEVSIEPKTKSDQEKLGTAIQKLAEEDPTFSVKLDPETGQTVIGGMGELHLDILVDRMKREFKVEANVGKPQVAYRETITKTVEKLEYTHKKQTGGSGQFAKVIIALEPFVGEDGAHYEFENKVTGGRVPKEYIPSVDAGAQDAMQYGVLAGYPLVNLKVTLLDGAYHDVDSSEMAFKIAGAQALKEAARKAGPVILEPMMAVEVITPEDYMGDVIGDLNSRRGQIQAMEERSGARVVKALVPLSEMFGYIGDLRSKTQGRANYSMVFDSYAEVPANVSKEIIAKATGE.

The tr-type G domain occupies 10–286; it reads KKVRNIGIMA…AVIDYLPSPL (277 aa). GTP contacts are provided by residues 19-26, 83-87, and 137-140; these read AHIDAGKT, DTPGH, and NKMD.

Belongs to the TRAFAC class translation factor GTPase superfamily. Classic translation factor GTPase family. EF-G/EF-2 subfamily.

The protein localises to the cytoplasm. Catalyzes the GTP-dependent ribosomal translocation step during translation elongation. During this step, the ribosome changes from the pre-translocational (PRE) to the post-translocational (POST) state as the newly formed A-site-bound peptidyl-tRNA and P-site-bound deacylated tRNA move to the P and E sites, respectively. Catalyzes the coordinated movement of the two tRNA molecules, the mRNA and conformational changes in the ribosome. This is Elongation factor G from Nocardia farcinica (strain IFM 10152).